Here is a 777-residue protein sequence, read N- to C-terminus: UPF0313 protein VP1980 (777 aa).

Residues 363 to 642 (AYDMIKTSVN…KALLRYHDPA (280 aa)) form the Radical SAM core domain. Residues cysteine 377, cysteine 381, and cysteine 384 each contribute to the [4Fe-4S] cluster site. The interval 675-777 (AQTPAQRRKS…PAGQRKPKRR (103 aa)) is disordered. The segment covering 680-698 (QRRKSGRHGANRFATKHTK) has biased composition (basic residues). Positions 709-719 (KRAEGGSKDGK) are enriched in basic and acidic residues. A compositionally biased stretch (polar residues) spans 736–747 (PASNGQRPSGNG). Residues 755–769 (KPQGQGRPQGQGKPA) show a composition bias toward low complexity.

The protein belongs to the UPF0313 family. The cofactor is [4Fe-4S] cluster.

This chain is UPF0313 protein VP1980, found in Vibrio parahaemolyticus serotype O3:K6 (strain RIMD 2210633).